A 117-amino-acid polypeptide reads, in one-letter code: UPF0122 protein Teth39_1278 (117 aa).

This sequence belongs to the UPF0122 family.

Might take part in the signal recognition particle (SRP) pathway. This is inferred from the conservation of its genetic proximity to ftsY/ffh. May be a regulatory protein. This is UPF0122 protein Teth39_1278 from Thermoanaerobacter pseudethanolicus (strain ATCC 33223 / 39E) (Clostridium thermohydrosulfuricum).